The following is a 425-amino-acid chain: MSRVNTMHQWKERLRDRARTASFGRFLWRRFLDDRLFQAAASLAYTTVFALVPLAIVVFGVLSAFPAFNEWKDALTDFIFNNFVPGAARSVQNYLNRSLEDLGKFTVAGMVALVASLLITLHSIEQTFNSIWRVAAARPKVTRFLIYWTVLTLGTMLAAASMAMAAYVFALPLFRTTEGQWLAEFAWRLAPMAVEFVCIVLIYRVVPQHAVRLRHALPGALLAVILMEIVKWGFGFYLGNFQTYQRIYGALSALPILLLWIYLSWVSVLLGASLASSMSAFRYQPEAMRLPPGFEIYGLLRLLGRFRQARLHGNGLDEDRILALEPMLTDTLMQELLCELKRIRLLRRDERSNWLLARDLDVVPLAELYESCQLRVPVEDRPLPCRDDPYGQAAAAALEQLRQPLRSVLAQPVGDLYTHLPGDPP.

Transmembrane regions (helical) follow at residues 48-68 (VFALVPLAIVVFGVLSAFPAF), 105-125 (FTVAGMVALVASLLITLHSIE), 154-174 (GTMLAAASMAMAAYVFALPLF), 182-202 (LAEFAWRLAPMAVEFVCIVLI), 216-236 (ALPGALLAVILMEIVKWGFGF), and 250-270 (ALSALPILLLWIYLSWVSVLL).

The protein belongs to the UPF0761 family.

The protein localises to the cell inner membrane. This Xanthomonas campestris pv. campestris (strain B100) protein is UPF0761 membrane protein xcc-b100_3490.